The following is a 314-amino-acid chain: uncharacterized protein (314 aa).

The N-terminal stretch at M1–G20 is a signal peptide. A lipid anchor (N-palmitoyl cysteine) is attached at C21. A lipid anchor (S-diacylglycerol cysteine) is attached at C21. The region spanning K59–T311 is the Fe/B12 periplasmic-binding domain.

This sequence belongs to the bacterial solute-binding protein 8 family. The complex is composed of two ATP-binding proteins (YvrA), two transmembrane proteins (YvrB) and a solute-binding protein (YvrC).

The protein resides in the cell membrane. Its function is as follows. Probably part of an ABC transporter complex. This is an uncharacterized protein from Bacillus subtilis (strain 168).